The following is a 472-amino-acid chain: Estrogen receptor beta (472 aa).

The tract at residues 1 to 104 is modulating; the sequence is MAFCSPAMMN…NPGSKRDAHF (104 aa). 2 NR C4-type zinc fingers span residues 105–125 and 141–165; these read CAVC…CEGC and CPAT…LRKC. Positions 105–170 form a DNA-binding region, nuclear receptor; sequence CAVCSDYASG…RLRKCYEVGM (66 aa). Residues 217-449 form the NR LBD domain; the sequence is SPEQFVLTLL…DLLLEMLNAH (233 aa).

Belongs to the nuclear hormone receptor family. NR3 subfamily. In terms of assembly, binds DNA as a homodimer. Can form a heterodimer with ER-alpha. A high expression is seen in the telencephalon, diencephalon, pituitary, testis and kidneys but little or no expression is seen in the cerebellum, pectoral muscle and adrenal gland.

It localises to the nucleus. Functionally, binds estrogens with an affinity similar to that of ER-alpha, and activates expression of reporter genes containing estrogen response elements (ERE) in an estrogen-dependent manner. The protein is Estrogen receptor beta (ESR2) of Coturnix japonica (Japanese quail).